The following is a 24-amino-acid chain: Skin secreted peptide 1 (24 aa).

Expressed by the skin glands.

The protein localises to the secreted. The protein is Skin secreted peptide 1 of Ascaphus truei (Coastal tailed frog).